We begin with the raw amino-acid sequence, 259 residues long: Small ribosomal subunit protein uS2 (259 aa).

A disordered region spans residues 232–259 (KAMEAEETKAAEKAVETEAKEETPQEAK).

Belongs to the universal ribosomal protein uS2 family.

The polypeptide is Small ribosomal subunit protein uS2 (Maridesulfovibrio salexigens (strain ATCC 14822 / DSM 2638 / NCIMB 8403 / VKM B-1763) (Desulfovibrio salexigens)).